The following is a 622-amino-acid chain: Coiled-coil domain-containing protein 17 (622 aa).

Coiled coils occupy residues 81–102 (RSAL…QEMR), 146–207 (ARRV…LEVL), and 294–320 (GELP…RGRA). Disordered stretches follow at residues 334–356 (SLQP…PLPP) and 584–622 (PAVG…PVSF). Over residues 344–356 (PLLPPPVAPPLPP) the composition is skewed to pro residues. Positions 593 to 615 (PRTEEPLSGVKDRDEGLGPHHSS) are enriched in basic and acidic residues.

This is Coiled-coil domain-containing protein 17 (CCDC17) from Homo sapiens (Human).